The following is a 720-amino-acid chain: Inactive serine protease PAMR1 (720 aa).

The N-terminal stretch at 1-21 (MELGWWPQLGLAFLQLLLISS) is a signal peptide. Intrachain disulfides connect C128–C150, C177–C199, C239–C250, C244–C260, C262–C271, C280–C329, C315–C342, and C414–C442. Residues 128–236 (CGQVLRVPKG…DGFHAIFEEI (109 aa)) form the CUB domain. One can recognise an EGF-like domain in the interval 235 to 272 (EITACSSSPCFHDGTCLLDSTGSYKCACLAGYTGKHCE). 2 consecutive Sushi domains span residues 278-344 (RNCS…ICIK) and 387-444 (APTK…SCIP). The region spanning 445–720 (ICGKTENVSA…FKDWIERNMK (276 aa)) is the Peptidase S1 domain. An N-linked (GlcNAc...) asparagine glycan is attached at N451. Disulfide bonds link C489-C505, C630-C649, and C661-C697.

The protein belongs to the peptidase S1 family.

It is found in the secreted. Functionally, may play a role in regeneration of skeletal muscle. This is Inactive serine protease PAMR1 (PAMR1) from Bos taurus (Bovine).